Reading from the N-terminus, the 304-residue chain is Small ribosomal subunit protein uS3 (304 aa).

One can recognise a KH type-2 domain in the interval 17–86 (IDEFFAEELG…DPQVDVQEVD (70 aa)). The disordered stretch occupies residues 216-304 (LLEGEPEDSE…DEMDEEGDDE (89 aa)).

Belongs to the universal ribosomal protein uS3 family. Part of the 30S ribosomal subunit.

Functionally, binds the lower part of the 30S subunit head. This is Small ribosomal subunit protein uS3 from Haloarcula marismortui (strain ATCC 43049 / DSM 3752 / JCM 8966 / VKM B-1809) (Halobacterium marismortui).